A 276-amino-acid polypeptide reads, in one-letter code: Large ribosomal subunit protein uL2 (276 aa).

The tract at residues 225–276 (MNPNDHPHGGGEGRNPIGRNPVTPWGKPALGAKTRKKKNPSNRFIVKRRGKK) is disordered. The span at 257-276 (KTRKKKNPSNRFIVKRRGKK) shows a compositional bias: basic residues.

It belongs to the universal ribosomal protein uL2 family. Part of the 50S ribosomal subunit. Forms a bridge to the 30S subunit in the 70S ribosome.

In terms of biological role, one of the primary rRNA binding proteins. Required for association of the 30S and 50S subunits to form the 70S ribosome, for tRNA binding and peptide bond formation. It has been suggested to have peptidyltransferase activity; this is somewhat controversial. Makes several contacts with the 16S rRNA in the 70S ribosome. The polypeptide is Large ribosomal subunit protein uL2 (Desulfitobacterium hafniense (strain DSM 10664 / DCB-2)).